Consider the following 495-residue polypeptide: N-succinylglutamate 5-semialdehyde dehydrogenase (495 aa).

220 to 225 (GSAGTG) is an NAD(+) binding site. Residues Glu-243 and Cys-277 contribute to the active site.

The protein belongs to the aldehyde dehydrogenase family. AstD subfamily.

It carries out the reaction N-succinyl-L-glutamate 5-semialdehyde + NAD(+) + H2O = N-succinyl-L-glutamate + NADH + 2 H(+). Its pathway is amino-acid degradation; L-arginine degradation via AST pathway; L-glutamate and succinate from L-arginine: step 4/5. Functionally, catalyzes the NAD-dependent reduction of succinylglutamate semialdehyde into succinylglutamate. This chain is N-succinylglutamate 5-semialdehyde dehydrogenase, found in Enterobacter sp. (strain 638).